Consider the following 608-residue polypeptide: Protein transport protein SEC9 (608 aa).

2 disordered regions span residues 1 to 23 and 50 to 307; these read MGFKKMFKKKDPTESEIRESMQD and VTQK…QTAA. Over residues 9-21 the composition is skewed to basic and acidic residues; that stretch reads KKDPTESEIRESM. 2 stretches are compositionally biased toward low complexity: residues 54 to 67 and 74 to 85; these read SSAAPPAARSNPYA and SGGNPYAAAAAG. The span at 100-121 shows a compositional bias: gly residues; sequence NGGGGNGGSNSNGGSNSNGGSN. Low complexity predominate over residues 122-134; sequence GSPYKMNNGGNNA. The span at 169-183 shows a compositional bias: basic and acidic residues; the sequence is SKKEEAPPPLEDPRL. A compositionally biased stretch (acidic residues) spans 198-215; sequence ERDDYEPVYDVGLPEEPE. The segment covering 241 to 260 has biased composition (basic and acidic residues); the sequence is NVDRELEEDKTALFGPRDDP. The 63-residue stretch at 390–452 folds into the t-SNARE coiled-coil homology 1 domain; it reads RFTKQQSAAS…KIAEDKAKEL (63 aa). The tract at residues 514-533 is disordered; that stretch reads GEKSKHRKEMMSKYGSRPGR. Residues 545 to 607 enclose the t-SNARE coiled-coil homology 2 domain; it reads DILEDEIDNN…HLNTARLAGI (63 aa).

The protein belongs to the SNAP-25 family.

This chain is Protein transport protein SEC9 (SEC9), found in Yarrowia lipolytica (strain CLIB 122 / E 150) (Yeast).